The chain runs to 340 residues: Organic solute transporter subunit alpha (340 aa).

Topologically, residues 1–48 are extracellular; it reads MEPGRTQIKLDPRYTADLLEVLKTNYGIPSACFSQPPTAAQLLRALGP. The chain crosses the membrane as a helical span at residues 49–69; sequence VELALTSILTLLALGSIAIFL. Residues 70–87 are Cytoplasmic-facing; the sequence is EDAVYLYKNTLCPIKRRT. The helical transmembrane segment at 88–108 threads the bilayer; that stretch reads LLWKSSAPTVVSVLCCFGLWI. Over 109 to 118 the chain is Extracellular; the sequence is PRSLVLVEMT. Residues 119 to 139 form a helical membrane-spanning segment; it reads ITSFYAVCFYLLMLVMVEGFG. Residues 140 to 181 lie on the Cytoplasmic side of the membrane; it reads GKEAVLRTLRDTPMMVHTGPCCCCCPCCPRLLLTRKKLQLLM. The helical transmembrane segment at 182 to 202 threads the bilayer; that stretch reads LGPFQYAFLKITLTLVGLFLV. At 203–218 the chain is on the extracellular side; sequence PDGIYDPADISEGSTA. A helical transmembrane segment spans residues 219 to 239; the sequence is LWINTFLGVSTLLALWTLGII. The Cytoplasmic portion of the chain corresponds to 240–255; sequence SRQARLHLGEQNMGAK. Residues 256–276 traverse the membrane as a helical segment; sequence FALFQVLLILTALQPSIFSVL. At 277–294 the chain is on the extracellular side; that stretch reads ANGGQIACSPPYSSKTRS. A helical membrane pass occupies residues 295-317; sequence QVMNCHLLILETFLMTVLTRMYY. The Cytoplasmic segment spans residues 318–340; it reads RRKDHKVGYETFSSPDLDLNLKA. A Phosphoserine modification is found at S330.

Belongs to the OST-alpha family. As to quaternary structure, interacts with SLC51B. The Ost-alpha/Ost-beta complex is a heterodimer composed of alpha (SLC51A) and beta (SLC51B) subunit. As to expression, widely expressed with a high expression in ileum. Expressed in testis, colon, liver, small intestine, kidney, ovary and adrenal gland; and at low levels in heart, lung, brain, pituitary, thyroid gland, uterus, prostate, mammary gland and fat.

It is found in the cell membrane. The protein localises to the endoplasmic reticulum membrane. It carries out the reaction taurocholate(out) = taurocholate(in). It catalyses the reaction estrone 3-sulfate(out) = estrone 3-sulfate(in). The catalysed reaction is dehydroepiandrosterone 3-sulfate(out) = dehydroepiandrosterone 3-sulfate(in). The enzyme catalyses tauroursodeoxycholate(out) = tauroursodeoxycholate(in). It carries out the reaction glycoursodeoxycholate(out) = glycoursodeoxycholate(in). It catalyses the reaction glycocholate(out) = glycocholate(in). The catalysed reaction is taurochenodeoxycholate(out) = taurochenodeoxycholate(in). The enzyme catalyses glycochenodeoxycholate(out) = glycochenodeoxycholate(in). It carries out the reaction taurodeoxycholate(out) = taurodeoxycholate(in). It catalyses the reaction glycodeoxycholate(out) = glycodeoxycholate(in). The catalysed reaction is prostaglandin E2(out) = prostaglandin E2(in). In terms of biological role, essential component of the Ost-alpha/Ost-beta complex, a heterodimer that acts as the intestinal basolateral transporter responsible for bile acid export from enterocytes into portal blood. Efficiently transports the major species of bile acids (taurocholate). Taurine conjugates are transported more efficiently across the basolateral membrane than glycine-conjugated bile acids. Can also transport steroids such as estrone 3-sulfate and dehydroepiandrosterone 3-sulfate, therefore playing a role in the enterohepatic circulation of sterols. Able to transport eicosanoids such as prostaglandin E2. This Homo sapiens (Human) protein is Organic solute transporter subunit alpha (SLC51A).